Here is a 435-residue protein sequence, read N- to C-terminus: GTPase Der (435 aa).

EngA-type G domains follow at residues 4–167 (PVVA…GDKA) and 175–350 (IRFS…ENQT). Residues 10–17 (GRPNVGKS), 57–61 (DTGGI), 119–122 (NKAD), 181–188 (GRPNVGKS), 228–232 (DTAGI), and 293–296 (NKWD) each bind GTP. The KH-like domain occupies 351-435 (RRIQSSVLND…PIKILARKRK (85 aa)).

Belongs to the TRAFAC class TrmE-Era-EngA-EngB-Septin-like GTPase superfamily. EngA (Der) GTPase family. In terms of assembly, associates with the 50S ribosomal subunit.

Its function is as follows. GTPase that plays an essential role in the late steps of ribosome biogenesis. The chain is GTPase Der from Lactobacillus johnsonii (strain CNCM I-12250 / La1 / NCC 533).